The primary structure comprises 245 residues: 1-(5-phosphoribosyl)-5-[(5-phosphoribosylamino)methylideneamino] imidazole-4-carboxamide isomerase (245 aa).

Asp7 serves as the catalytic Proton acceptor. Residue Asp129 is the Proton donor of the active site.

Belongs to the HisA/HisF family.

The protein localises to the cytoplasm. The catalysed reaction is 1-(5-phospho-beta-D-ribosyl)-5-[(5-phospho-beta-D-ribosylamino)methylideneamino]imidazole-4-carboxamide = 5-[(5-phospho-1-deoxy-D-ribulos-1-ylimino)methylamino]-1-(5-phospho-beta-D-ribosyl)imidazole-4-carboxamide. The protein operates within amino-acid biosynthesis; L-histidine biosynthesis; L-histidine from 5-phospho-alpha-D-ribose 1-diphosphate: step 4/9. This is 1-(5-phosphoribosyl)-5-[(5-phosphoribosylamino)methylideneamino] imidazole-4-carboxamide isomerase from Escherichia coli (strain ATCC 8739 / DSM 1576 / NBRC 3972 / NCIMB 8545 / WDCM 00012 / Crooks).